Here is a 394-residue protein sequence, read N- to C-terminus: Ceramide synthase 4 (394 aa).

Residues 1-31 (MLSSFNEWFWQDRFWLPPNVTWTELEDRDGR) are Lumenal-facing. N-linked (GlcNAc...) asparagine glycosylation occurs at asparagine 19. Residues 32–52 (VYPHPQDLLAALPLALVLLAM) form a helical membrane-spanning segment. The homeobox-like stretch occupies residues 67-128 (WLGVRDQTRR…RRRRNQDRPQ (62 aa)). The TLC domain maps to 131–332 (KKFCEASWRF…ILRMLYSFMK (202 aa)). The next 4 helical transmembrane spans lie at 140 to 160 (FLFYLSSFVGGLSVLYHESWL), 179 to 199 (LYWWYLLELGFYLSLLIRLPF), 209 to 229 (QVIHHFVAVILMTFSYSANLL), and 260 to 280 (VCDALFLIFSFVFFYTRLVLF). The short motif at 291–301 (ESISNRGPFFG) is the Last loop motif element. A helical membrane pass occupies residues 304 to 324 (FFNGLLMLLQLLHVFWSCLIL). Residues 325 to 394 (RMLYSFMKKG…RLTNRHTTAT (70 aa)) are Cytoplasmic-facing. The disordered stretch occupies residues 341-394 (RSDVEESDSSEEAAAAQEPLQLKNGAAGGPRPAPTDGPRSRVAGRLTNRHTTAT). Residues serine 342, serine 349, and serine 350 each carry the phosphoserine modification.

In terms of processing, phosphorylated at the C-terminus by CK2. N-glycosylated.

The protein localises to the endoplasmic reticulum membrane. It carries out the reaction sphinganine + octadecanoyl-CoA = N-(octadecanoyl)-sphinganine + CoA + H(+). It catalyses the reaction eicosanoyl-CoA + sphinganine = N-eicosanoylsphinganine + CoA + H(+). The enzyme catalyses docosanoyl-CoA + sphinganine = N-docosanoylsphinganine + CoA + H(+). The catalysed reaction is tetracosanoyl-CoA + sphinganine = N-tetracosanoylsphinganine + CoA + H(+). It carries out the reaction hexacosanoyl-CoA + sphinganine = N-hexacosanoylsphinganine + CoA + H(+). It catalyses the reaction a fatty acyl-CoA + sphing-4-enine = an N-acylsphing-4-enine + CoA + H(+). The enzyme catalyses sphing-4-enine + octadecanoyl-CoA = N-octadecanoylsphing-4-enine + CoA + H(+). The catalysed reaction is hexadecasphinganine + octadecanoyl-CoA = N-octadecanoylhexadecasphinganine + CoA + H(+). It participates in lipid metabolism; sphingolipid metabolism. Functionally, ceramide synthase that catalyzes formation of ceramide from sphinganine and acyl-CoA substrates, with high selectivity toward long and very-long chains (C18:0-C22:0) as acyl donor. This chain is Ceramide synthase 4, found in Homo sapiens (Human).